The primary structure comprises 623 residues: V-type proton ATPase catalytic subunit A (623 aa).

Gly252 to Thr259 is a binding site for ATP.

It belongs to the ATPase alpha/beta chains family. V-ATPase is a heteromultimeric enzyme composed of a peripheral catalytic V1 complex (main components: subunits A, B, C, D, E, and F) attached to an integral membrane V0 proton pore complex (main component: the proteolipid protein).

It catalyses the reaction ATP + H2O + 4 H(+)(in) = ADP + phosphate + 5 H(+)(out). Functionally, catalytic subunit of the peripheral V1 complex of vacuolar ATPase. V-ATPase vacuolar ATPase is responsible for acidifying a variety of intracellular compartments in eukaryotic cells. The chain is V-type proton ATPase catalytic subunit A from Vigna radiata var. radiata (Mung bean).